We begin with the raw amino-acid sequence, 834 residues long: RNA-binding protein 12B-B (834 aa).

An RRM 1 domain is found at Pro-154–Glu-229. Positions Gly-237–Ser-277 are disordered. The segment covering Asp-244–Pro-255 has biased composition (basic and acidic residues). Residues Ile-259–Ser-277 show a composition bias toward basic residues. 2 consecutive RRM domains span residues Phe-283 to Arg-359 and Leu-401 to Glu-478. Disordered regions lie at residues Gly-546 to Glu-572 and His-621 to Glu-643. The span at Gln-550–Glu-572 shows a compositional bias: basic and acidic residues. Ser-701 is modified (phosphoserine). An RRM 4 domain is found at Ile-758–Leu-834.

In Mus musculus (Mouse), this protein is RNA-binding protein 12B-B (Rbm12b2).